The following is a 1696-amino-acid chain: E3 ubiquitin-protein ligase listerin (1696 aa).

HEAT repeat units follow at residues Arg-17–Lys-55, Phe-102–Arg-140, Cys-144–Ser-181, Ala-209–His-250, Asn-252–Thr-289, Leu-354–Ser-394, Glu-431–Asp-468, Phe-542–Gln-580, Glu-596–Val-634, Leu-921–Leu-958, Met-992–Ala-1029, Asp-1108–Leu-1148, Val-1150–Ser-1188, Gly-1245–Tyr-1282, Asp-1307–Gly-1344, Val-1371–Leu-1405, and Gly-1406–Leu-1442. The RING-type zinc finger occupies Cys-1645–Arg-1692.

This sequence belongs to the LTN1 family. Component of the ribosome quality control complex (RQC), composed of at least the E3 ubiquitin ligase LTN1 and NEMF associated with the 60S ribosomal subunit. The complex probably also contains TCF25 as well as VCP/p97 and its ubiquitin-binding cofactors.

It is found in the cytoplasm. The protein resides in the cytosol. It carries out the reaction S-ubiquitinyl-[E2 ubiquitin-conjugating enzyme]-L-cysteine + [acceptor protein]-L-lysine = [E2 ubiquitin-conjugating enzyme]-L-cysteine + N(6)-ubiquitinyl-[acceptor protein]-L-lysine.. It participates in protein modification; protein ubiquitination. E3 ubiquitin-protein ligase component of the ribosome quality control complex (RQC), a ribosome-associated complex that mediates ubiquitination and extraction of incompletely synthesized nascent chains for proteasomal degradation. Within the RQC complex, LTN1 is recruited to stalled 60S ribosomal subunits by NEMF and mediates ubiquitination of stalled nascent chains. Ubiquitination leads to VCP/p97 recruitment for extraction and degradation of the incomplete translation product. This chain is E3 ubiquitin-protein ligase listerin (ltn1), found in Xenopus tropicalis (Western clawed frog).